The chain runs to 224 residues: Leucyl/phenylalanyl-tRNA--protein transferase (224 aa).

This sequence belongs to the L/F-transferase family.

It localises to the cytoplasm. The catalysed reaction is N-terminal L-lysyl-[protein] + L-leucyl-tRNA(Leu) = N-terminal L-leucyl-L-lysyl-[protein] + tRNA(Leu) + H(+). The enzyme catalyses N-terminal L-arginyl-[protein] + L-leucyl-tRNA(Leu) = N-terminal L-leucyl-L-arginyl-[protein] + tRNA(Leu) + H(+). It carries out the reaction L-phenylalanyl-tRNA(Phe) + an N-terminal L-alpha-aminoacyl-[protein] = an N-terminal L-phenylalanyl-L-alpha-aminoacyl-[protein] + tRNA(Phe). In terms of biological role, functions in the N-end rule pathway of protein degradation where it conjugates Leu, Phe and, less efficiently, Met from aminoacyl-tRNAs to the N-termini of proteins containing an N-terminal arginine or lysine. This Rhodopseudomonas palustris (strain HaA2) protein is Leucyl/phenylalanyl-tRNA--protein transferase.